We begin with the raw amino-acid sequence, 197 residues long: Adenylate kinase (197 aa).

16 to 21 (GAGKGT) serves as a coordination point for ATP. The interval 36 to 65 (STGDILRDHVARGTELGQQVKPILDAGHLV) is NMP. AMP contacts are provided by residues Thr37, Arg42, 63-65 (HLV), 90-93 (GFPR), and Gln97. An LID region spans residues 131–147 (ERGNQAQARGEAVRSDD). Arg132 serves as a coordination point for ATP. Residues Arg144 and Arg155 each coordinate AMP. Gly183 is a binding site for ATP.

Belongs to the adenylate kinase family. As to quaternary structure, monomer.

The protein localises to the cytoplasm. It carries out the reaction AMP + ATP = 2 ADP. The protein operates within purine metabolism; AMP biosynthesis via salvage pathway; AMP from ADP: step 1/1. Functionally, catalyzes the reversible transfer of the terminal phosphate group between ATP and AMP. Plays an important role in cellular energy homeostasis and in adenine nucleotide metabolism. The polypeptide is Adenylate kinase (Deinococcus deserti (strain DSM 17065 / CIP 109153 / LMG 22923 / VCD115)).